Consider the following 298-residue polypeptide: MQLVIISGRSGSGKSIALQALEDLGYYAIDNLPASLMAPLIDELREGPPSRTHIAVSIDARNLPDALRRFPVLLEEIRGRGIQCQVVYLTADSRILLERYSATRRRHPLTRASEMTLAEAIEQEQTYLAPIRDIGDLVIDTSSLSVHELRGRIAEQVARHSGRHLTLTFESFGYKRGVPLDADMVFDARCLPNPYWDPQLRGFDGRDAQIVTFLEAYPDVRAMADDIRHWLERWLPAYLASNRSYLTVAVGCTGGQHRSVYLVEDLAHHFAQQMSGVRLRHRELGVQAALPEDGNAVS.

8-15 (GRSGSGKS) provides a ligand contact to ATP. 59–62 (DARN) provides a ligand contact to GTP.

This sequence belongs to the RapZ-like family.

In terms of biological role, displays ATPase and GTPase activities. The chain is Nucleotide-binding protein Csal_2229 from Chromohalobacter salexigens (strain ATCC BAA-138 / DSM 3043 / CIP 106854 / NCIMB 13768 / 1H11).